Consider the following 116-residue polypeptide: Ribosome-binding factor A (116 aa).

This sequence belongs to the RbfA family. Monomer. Binds 30S ribosomal subunits, but not 50S ribosomal subunits or 70S ribosomes.

The protein resides in the cytoplasm. In terms of biological role, one of several proteins that assist in the late maturation steps of the functional core of the 30S ribosomal subunit. Associates with free 30S ribosomal subunits (but not with 30S subunits that are part of 70S ribosomes or polysomes). Required for efficient processing of 16S rRNA. May interact with the 5'-terminal helix region of 16S rRNA. The sequence is that of Ribosome-binding factor A from Streptococcus pyogenes serotype M28 (strain MGAS6180).